A 301-amino-acid chain; its full sequence is HTH-type transcriptional regulator MtrA (301 aa).

An HTH araC/xylS-type domain is found at 196–297 (KRLGHLIQKV…HVSPGQYRKE (102 aa)). 2 consecutive DNA-binding regions (H-T-H motif) follow at residues 216-237 (DKMV…KSQV) and 264-287 (VLEV…KRQY).

With respect to regulation, the affinity for the mtrCDE promoter increases 2-fold in the presence of TX-100, a known effector and substrate of the MtrCDE pump. Functionally, involved in the induction of the mtrCDE-encoded efflux pump. Binds specifically to the mtrCDE promoter region. Required for high-level inducible resistance to the detergent Triton X-100 (TX-100) and the spermicide nonoxynol-9 (N-9). The polypeptide is HTH-type transcriptional regulator MtrA (Neisseria gonorrhoeae).